The following is a 562-amino-acid chain: Sulfite reductase [NADPH] hemoprotein beta-component (562 aa).

C428, C434, C473, and C477 together coordinate [4Fe-4S] cluster. C477 is a siroheme binding site.

The protein belongs to the nitrite and sulfite reductase 4Fe-4S domain family. In terms of assembly, alpha(8)-beta(8). The alpha component is a flavoprotein, the beta component is a hemoprotein. It depends on siroheme as a cofactor. [4Fe-4S] cluster is required as a cofactor.

The catalysed reaction is hydrogen sulfide + 3 NADP(+) + 3 H2O = sulfite + 3 NADPH + 4 H(+). It participates in sulfur metabolism; hydrogen sulfide biosynthesis; hydrogen sulfide from sulfite (NADPH route): step 1/1. Functionally, component of the sulfite reductase complex that catalyzes the 6-electron reduction of sulfite to sulfide. This is one of several activities required for the biosynthesis of L-cysteine from sulfate. This is Sulfite reductase [NADPH] hemoprotein beta-component from Myxococcus xanthus (strain DK1622).